A 974-amino-acid polypeptide reads, in one-letter code: RING finger protein nhl-1 (974 aa).

Residues 1-29 (MSSSPQNEAEAREKMRELMSRPPSSRPAD) form a disordered region. A compositionally biased stretch (basic and acidic residues) spans 9-19 (AEAREKMRELM). The segment at 43–84 (CPICLDRYKQPKLLPCQHTFCYPCLESCADTLHRNLKCPECR) adopts an RING-type zinc-finger fold. 2 disordered regions span residues 360-395 (VKSD…IRYR) and 416-548 (SLLT…DFPV). The span at 416–431 (SLLTTSVTADSSSRTS) shows a compositional bias: polar residues. The segment covering 437 to 446 (RVTRSVEPTK) has biased composition (basic and acidic residues). The span at 447–465 (SRPTSLIVPNTETPRTVSP) shows a compositional bias: polar residues. Residues 488 to 501 (APLPQLPIRKPPLP) are compositionally biased toward pro residues. Over residues 511–528 (LNEKVETIRRAHQQRQDA) the composition is skewed to basic and acidic residues. Low complexity predominate over residues 529–538 (SRAASRAVSS). NHL repeat units follow at residues 699-742 (RAVF…FDKD), 746-788 (VRQF…FGLE), 792-835 (LFSF…FDKN), 839-883 (IAKF…FDPH), 887-930 (LFSF…FDAQ), and 934-974 (VSSF…IQIF).

In terms of assembly, interacts with ubc-13.

The sequence is that of RING finger protein nhl-1 from Caenorhabditis elegans.